A 149-amino-acid polypeptide reads, in one-letter code: MKLILREDVENLGKGGDLVDVKPGYGRNFLLPRGLAVTANPKNVKELEHQKAVAAAKAAKLKASAQAVAKRLSETPVTLKRKVGEQDKLYGSVTALDVAEALAARGVQLDRRSIVLDEPIKTVGEFEVPVKLHSEVAGKVKVTVEAEAE.

Belongs to the bacterial ribosomal protein bL9 family.

Binds to the 23S rRNA. In Anaeromyxobacter dehalogenans (strain 2CP-1 / ATCC BAA-258), this protein is Large ribosomal subunit protein bL9.